The sequence spans 155 residues: Small ribosomal subunit protein uS7c (155 aa).

This sequence belongs to the universal ribosomal protein uS7 family. As to quaternary structure, part of the 30S ribosomal subunit.

Its subcellular location is the plastid. It is found in the chloroplast. Functionally, one of the primary rRNA binding proteins, it binds directly to 16S rRNA where it nucleates assembly of the head domain of the 30S subunit. The sequence is that of Small ribosomal subunit protein uS7c (rps7) from Gunnera chilensis (Chilean rhubarb).